The sequence spans 904 residues: Pantothenate kinase 2 (904 aa).

Residues 1 to 56 (MAANNNSDPILDEGGGGGVKHEAVGEAGEGKGGGGGAAATQAPAAMLPRSGSRPQL) are disordered. Residues 1 to 472 (MAANNNSDPI…LGDLNEKISW (472 aa)) are pantothenate kinase. Residues 473–904 (MEKFVQKGTQ…DCICKFEPVP (432 aa)) form a 4'-phosphopantetheine phosphatase region. Mn(2+)-binding residues include aspartate 735, asparagine 736, and aspartate 771. Residues 855–859 (EGMGR) carry the Subfamily II EGMGR motif motif.

In the N-terminal section; belongs to the type II pantothenate kinase family. This sequence in the C-terminal section; belongs to the damage-control phosphatase family. Phosphopantetheine phosphatase II subfamily. The cofactor is Mn(2+). Ni(2+) serves as cofactor.

It carries out the reaction (R)-pantothenate + ATP = (R)-4'-phosphopantothenate + ADP + H(+). It catalyses the reaction (R)-4'-phosphopantothenate + H2O = (R)-pantothenate + phosphate. The enzyme catalyses (R)-4'-phosphopantetheine + H2O = (R)-pantetheine + phosphate. The catalysed reaction is (R)-4'-phosphopantetheine sulfonate + H2O = (R)-pantetheine sulfonate + phosphate. It functions in the pathway cofactor biosynthesis; coenzyme A biosynthesis; CoA from (R)-pantothenate: step 1/5. Functionally, catalyzes the phosphorylation of pantothenate the first step in CoA biosynthesis. May play a role in the physiological regulation of the intracellular CoA concentration. Functionally redudant with PANK1. The phosphatase activity shows preference for normal or oxidatively damaged intermediates of 4'-phosphopantetheine, which provides strong indirect evidence that the phosphatase activity pre-empts damage in the CoA pathway. Hydrolyzing excess 4'-phosphopantetheine could constitute a directed overflow mechanism to prevent its oxidation to the S-sulfonate, sulfonate, or other forms. Hydrolyzing 4'-phosphopantetheine sulfonate or S-sulfonate would forestall their conversion to inactive forms of CoA and acyl carrier protein. This Oryza sativa subsp. japonica (Rice) protein is Pantothenate kinase 2.